Consider the following 375-residue polypeptide: Protein NDRG3 (375 aa).

A disordered region spans residues 326–375; it reads RSRTHSASSSGSMEIPRSRSHTSNAQLKSSSNNSLSNQIQETPQTIELSC. A compositionally biased stretch (low complexity) spans 348 to 363; it reads SNAQLKSSSNNSLSNQ. Residues 364–375 show a composition bias toward polar residues; the sequence is IQETPQTIELSC.

The protein belongs to the NDRG family.

In Xenopus laevis (African clawed frog), this protein is Protein NDRG3.